We begin with the raw amino-acid sequence, 427 residues long: UPF0597 protein FN1147 (427 aa).

The protein belongs to the UPF0597 family.

This Fusobacterium nucleatum subsp. nucleatum (strain ATCC 25586 / DSM 15643 / BCRC 10681 / CIP 101130 / JCM 8532 / KCTC 2640 / LMG 13131 / VPI 4355) protein is UPF0597 protein FN1147.